We begin with the raw amino-acid sequence, 865 residues long: Alanine--tRNA ligase (865 aa).

Positions 556, 560, 660, and 664 each coordinate Zn(2+).

Belongs to the class-II aminoacyl-tRNA synthetase family. Zn(2+) is required as a cofactor.

It localises to the cytoplasm. It catalyses the reaction tRNA(Ala) + L-alanine + ATP = L-alanyl-tRNA(Ala) + AMP + diphosphate. Functionally, catalyzes the attachment of alanine to tRNA(Ala) in a two-step reaction: alanine is first activated by ATP to form Ala-AMP and then transferred to the acceptor end of tRNA(Ala). Also edits incorrectly charged Ser-tRNA(Ala) and Gly-tRNA(Ala) via its editing domain. The chain is Alanine--tRNA ligase from Vesicomyosocius okutanii subsp. Calyptogena okutanii (strain HA).